Reading from the N-terminus, the 163-residue chain is MQHYVTPDLCDAYPDLVQVLEPMFSNFGGRDSFGGQIVTIKCFEDNSLVKEQVELDGKGKVLVVDGGGSLRRALLGDMLAEKAAKNGWEGLVIYGCVRDVDVLIQTDVGVQALASHPMKTDKRGIGDLNVVVTFAGVTFRPGEYVYADNNGVLVSPKPLKMPE.

Residues 76-79 and arginine 98 contribute to the substrate site; that span reads GDML. Aspartate 99 serves as a coordination point for a divalent metal cation.

It belongs to the class II aldolase/RraA-like family. Homotrimer. A divalent metal cation is required as a cofactor.

It catalyses the reaction 4-hydroxy-4-methyl-2-oxoglutarate = 2 pyruvate. The enzyme catalyses oxaloacetate + H(+) = pyruvate + CO2. In terms of biological role, catalyzes the aldol cleavage of 4-hydroxy-4-methyl-2-oxoglutarate (HMG) into 2 molecules of pyruvate. Also contains a secondary oxaloacetate (OAA) decarboxylase activity due to the common pyruvate enolate transition state formed following C-C bond cleavage in the retro-aldol and decarboxylation reactions. In Pseudomonas putida (strain ATCC 47054 / DSM 6125 / CFBP 8728 / NCIMB 11950 / KT2440), this protein is Putative 4-hydroxy-4-methyl-2-oxoglutarate aldolase.